The chain runs to 159 residues: Ribosomal RNA large subunit methyltransferase H (159 aa).

Residues leucine 76, glycine 108, and 127-132 (FSKMTF) each bind S-adenosyl-L-methionine.

It belongs to the RNA methyltransferase RlmH family. In terms of assembly, homodimer.

It is found in the cytoplasm. The enzyme catalyses pseudouridine(1915) in 23S rRNA + S-adenosyl-L-methionine = N(3)-methylpseudouridine(1915) in 23S rRNA + S-adenosyl-L-homocysteine + H(+). Its function is as follows. Specifically methylates the pseudouridine at position 1915 (m3Psi1915) in 23S rRNA. The sequence is that of Ribosomal RNA large subunit methyltransferase H from Staphylococcus saprophyticus subsp. saprophyticus (strain ATCC 15305 / DSM 20229 / NCIMB 8711 / NCTC 7292 / S-41).